Reading from the N-terminus, the 415-residue chain is Sensor protein kinase WalK (415 aa).

The region spanning 11–63 (RTITKPITDMRNQTVEMSRGNYTQRVKIYGNDEIGELALAFNNLSKRVQEAQA) is the HAMP domain. The PAS domain maps to 68–138 (EKRRLDSVIT…EIQENNDSFL (71 aa)). Residues His-78, Asp-81, His-171, and Glu-175 each contribute to the Zn(2+) site. The PAC domain maps to 121–185 (LEDEFKLEEI…QQQVERERRE (65 aa)). The region spanning 189–407 (NVSHELRTPL…SIFITLPCEV (219 aa)) is the Histidine kinase domain. His-192 carries the post-translational modification Phosphohistidine; by autocatalysis.

In terms of assembly, forms homodimers. Forms homooligomers. NH4(+) serves as cofactor. Autophosphorylated.

Its subcellular location is the cell membrane. It carries out the reaction ATP + protein L-histidine = ADP + protein N-phospho-L-histidine.. With respect to regulation, by zinc. Zinc-binding negatively regulates WalK kinase activity and thus autophosphorylation. Member of the two-component regulatory system WalK/WalR that regulates genes involved in cell wall metabolism, virulence regulation, biofilm production, oxidative stress resistance and antibiotic resistance via direct or indirect regulation of autolysins. Functions as a sensor protein kinase which is autophosphorylated at a histidine residue in the dimerization domain and transfers its phosphate group to the conserved aspartic acid residue in the regulatory domain of WalR. In turn, WalR binds to the upstream promoter regions of the target genes to positively and negatively regulate their expression. This Staphylococcus aureus protein is Sensor protein kinase WalK (walK).